We begin with the raw amino-acid sequence, 363 residues long: 2,5-diketocamphane 1,2-monooxygenase 1 (363 aa).

FMN is bound by residues Met-74 and 186–194; that span reads TGLTKNSSS.

This sequence belongs to the bacterial luciferase oxidoreductase family. As to quaternary structure, homodimer. Likely forms a loose transient complex with a P.putida flavin reductase that provides the required FMNH(2) to the enzyme.

It catalyses the reaction (1R,4R)-bornane-2,5-dione + FMNH2 + O2 = (1R,4R)-5-oxo-1,2-campholide + FMN + H2O + H(+). It participates in terpene metabolism; (R)-camphor degradation. Functionally, involved in the degradation and assimilation of (+)-camphor, which allows P.putida strain NCIMB 10007 to grow on this enantiomer of camphor as the sole carbon source. Catalyzes the FMNH(2)-dependent lactonization of 2,5-diketocamphane via a Baeyer-Villiger oxidation to produce the unstable lactone 5-oxo-1,2-campholide with (R,R) configuration, that presumably undergoes spontaneous hydrolysis to form 2-oxo-Delta(3)-4,5,5-trimethylcyclopentenylacetate. Is also able to convert (+)-camphor and norcamphor to the corresponding lactone in vitro. Shows no conversion of (-)-camphor, (+)-fenchone, (-)-fenchone, and (+)-nopinone. Acts only on bicyclic ketones; is not active towards monocyclic ketones, aromatic ketones, the aliphatic 2-decanone, 1-indanone and progesterone. The protein is 2,5-diketocamphane 1,2-monooxygenase 1 of Pseudomonas putida (Arthrobacter siderocapsulatus).